The following is a 134-amino-acid chain: Holo-[acyl-carrier-protein] synthase (134 aa).

Mg(2+)-binding residues include Asp-8 and Glu-57.

It belongs to the P-Pant transferase superfamily. AcpS family. Requires Mg(2+) as cofactor.

The protein localises to the cytoplasm. It catalyses the reaction apo-[ACP] + CoA = holo-[ACP] + adenosine 3',5'-bisphosphate + H(+). Functionally, transfers the 4'-phosphopantetheine moiety from coenzyme A to a Ser of acyl-carrier-protein. The chain is Holo-[acyl-carrier-protein] synthase from Agrobacterium fabrum (strain C58 / ATCC 33970) (Agrobacterium tumefaciens (strain C58)).